We begin with the raw amino-acid sequence, 1663 residues long: Cortactin-binding protein 2 (1663 aa).

Disordered stretches follow at residues 1–23 (MATD…AGAA), 203–222 (KKKT…RSTE), 367–440 (GASV…LHPG), 454–478 (GNAN…SPTS), and 498–616 (RFTS…PKPS). The stretch at 119–276 (KKMQERMSAQ…EQLKRGSDSK (158 aa)) forms a coiled coil. Over residues 386 to 396 (PSTGSTPDPTS) the composition is skewed to low complexity. An Asymmetric dimethylarginine modification is found at Arg498. Residues 583–593 (TVASTPSSLPQ) are compositionally biased toward polar residues. ANK repeat units lie at residues 709–739 (GRPT…DINY), 743–772 (DGHS…QVNA), 776–805 (NGFT…NINH), 809–838 (GGQT…NRSV), 842–871 (DGWT…PAHG), and 912–942 (EGWT…EPER). Residues 1449–1482 (KGESGAWRKVNTSPRRKSGRFSLPTWNKPDLSTE) are disordered. Ser1524 is subject to Phosphoserine. Positions 1581–1663 (QKEVSPLSSH…KNEHLEKPNK (83 aa)) are disordered. Polar residues predominate over residues 1582 to 1599 (KEVSPLSSHQTTECSNSK). The span at 1624–1638 (SQNTKRSSSSSNTRQ) shows a compositional bias: low complexity. A compositionally biased stretch (polar residues) spans 1639–1648 (IEINNNSKEV). The span at 1653–1663 (HKNEHLEKPNK) shows a compositional bias: basic and acidic residues.

As to quaternary structure, interacts with CTTN/cortactin SH3 domain. Interacts with STRN, STRN4/zinedin and MOB4/phocein; this interactions mediate the association with the STRIPAK core complex and may regulate dendritic spine distribution of the STRIPAK complex in hippocampal neurons. Activation of glutamate receptors weakens the interaction with STRN and STRN4. In terms of tissue distribution, highest expression in brain. Also expressed in kidney, pancreas, lung, heart, liver, skeletal muscle and placenta.

It is found in the cytoplasm. It localises to the cell cortex. The protein resides in the cell projection. Its subcellular location is the dendritic spine. Its function is as follows. Regulates the dendritic spine distribution of CTTN/cortactin in hippocampal neurons, and thus controls dendritic spinogenesis and dendritic spine maintenance. Associates with the striatin-interacting phosphatase and kinase (STRIPAK) core complex to regulate dendritic spine distribution of the STRIPAK complex in hippocampal neurons. The protein is Cortactin-binding protein 2 of Homo sapiens (Human).